We begin with the raw amino-acid sequence, 364 residues long: 1-acyl-sn-glycerol-3-phosphate acyltransferase epsilon (364 aa).

2 helical membrane-spanning segments follow: residues 15-35 and 61-81; these read LLPS…WGVW and MVLF…GDLP. Residues 93–98 carry the HXXXXD motif motif; the sequence is HQSTVD. A helical membrane pass occupies residues 344–364; it reads LYVNTWIYGTLLGCLWVTIKA.

This sequence belongs to the 1-acyl-sn-glycerol-3-phosphate acyltransferase family. As to expression, widely expressed.

The protein resides in the endoplasmic reticulum membrane. Its subcellular location is the nucleus envelope. It localises to the mitochondrion. The catalysed reaction is a 1-acyl-sn-glycero-3-phosphate + an acyl-CoA = a 1,2-diacyl-sn-glycero-3-phosphate + CoA. It carries out the reaction 1-(9Z-octadecenoyl)-sn-glycero-3-phosphate + tetradecanoyl-CoA = 1-(9Z)-octadecenoyl-2-tetradecanoyl-sn-glycero-3-phosphate + CoA. It catalyses the reaction pentadecanoyl-CoA + 1-(9Z-octadecenoyl)-sn-glycero-3-phosphate = 1-(9Z)-octadecenoyl-2-pentadecanoyl-sn-glycero-3-phosphate + CoA. The enzyme catalyses 1-(9Z-octadecenoyl)-sn-glycero-3-phosphate + octadecanoyl-CoA = 1-(9Z-octadecenoyl)-2-octadecanoyl-sn-glycero-3-phosphate + CoA. The catalysed reaction is nonadecanoyl-CoA + 1-(9Z-octadecenoyl)-sn-glycero-3-phosphate = 1-(9Z)-octadecenoyl-2-nonadecanoyl-sn-glycero-3-phosphate + CoA. It carries out the reaction 1-(9Z-octadecenoyl)-sn-glycero-3-phosphoethanolamine + (9Z)-octadecenoyl-CoA = 1,2-di-(9Z-octadecenoyl)-sn-glycero-3-phosphoethanolamine + CoA. It catalyses the reaction 1-(9Z-octadecenoyl)-sn-glycero-3-phosphocholine + (9Z)-octadecenoyl-CoA = 1,2-di-(9Z-octadecenoyl)-sn-glycero-3-phosphocholine + CoA. The enzyme catalyses 1-(9Z-octadecenoyl)-sn-glycero-3-phospho-(1D-myo-inositol) + (5Z,8Z,11Z,14Z)-eicosatetraenoyl-CoA = 1-(9Z-octadecenoyl)-2-(5Z,8Z,11Z,14Z-eicosatetraenoyl)-sn-glycero-3-phospho-1D-myo-inositol + CoA. The catalysed reaction is 1-(9Z-octadecenoyl)-sn-glycero-3-phospho-L-serine + (9Z)-octadecenoyl-CoA = 1,2-di-(9Z)-octadecenoyl-sn-glycero-3-phospho-L-serine + CoA. It carries out the reaction 1-(9Z-octadecenoyl)-sn-glycero-3-phospho-L-serine + (5Z,8Z,11Z,14Z)-eicosatetraenoyl-CoA = 1-(9Z-octadecenoyl)-2-(5Z,8Z,11Z,14Z-eicosatetraenoyl)-sn-glycero-3-phospho-L-serine + CoA. It catalyses the reaction 1-hexadecanoyl-sn-glycero-3-phosphate + (9Z)-octadecenoyl-CoA = 1-hexadecanoyl-2-(9Z-octadecenoyl)-sn-glycero-3-phosphate + CoA. The enzyme catalyses 1-heptadecanoyl-sn-glycero-3-phosphate + (9Z)-octadecenoyl-CoA = 1-heptadecanoyl-2-(9Z)-octadecenoyl-sn-glycero-3-phosphate + CoA. The catalysed reaction is 1-(5Z,8Z,11Z,14Z-eicosatetraenoyl)-sn-glycero-3-phosphate + (9Z)-octadecenoyl-CoA = 1-(5Z,8Z,11Z,14Z)-eicosatetraenoyl-2-(9Z)-octadecenoyl-sn-glycero-3-phosphate + CoA. It carries out the reaction 1-octadecanoyl-sn-glycero-3-phosphate + (9Z)-octadecenoyl-CoA = 1-octadecanoyl-2-(9Z-octadecenoyl)-sn-glycero-3-phosphate + CoA. It catalyses the reaction 1-(9Z-octadecenoyl)-sn-glycero-3-phosphate + (5Z,8Z,11Z,14Z)-eicosatetraenoyl-CoA = 1-(9Z)-octadecenoyl-2-(5Z,8Z,11Z,14Z)-eicosatetraenoyl-sn-glycero-3-phosphate + CoA. The enzyme catalyses heptadecanoyl-CoA + 1-(9Z-octadecenoyl)-sn-glycero-3-phosphate = 1-(9Z)-octadecenoyl-2-heptadecanoyl-sn-glycero-3-phosphate + CoA. The catalysed reaction is 1-(9Z-octadecenoyl)-sn-glycero-3-phosphocholine + (5Z,8Z,11Z,14Z)-eicosatetraenoyl-CoA = 1-(9Z)-octadecenoyl-2-(5Z,8Z,11Z,14Z)-icosatetraenoyl-sn-glycero-3-phosphocholine + CoA. It carries out the reaction 1-(9Z-octadecenoyl)-sn-glycero-3-phosphate + (9Z)-octadecenoyl-CoA = 1,2-di-(9Z-octadecenoyl)-sn-glycero-3-phosphate + CoA. It catalyses the reaction 1-(9Z-octadecenoyl)-sn-glycero-3-phosphate + hexadecanoyl-CoA = 1-hexadecanoyl-2-(9Z-octadecenoyl)-sn-glycero-3-phosphate + CoA. The protein operates within phospholipid metabolism; CDP-diacylglycerol biosynthesis; CDP-diacylglycerol from sn-glycerol 3-phosphate: step 2/3. Its function is as follows. Converts 1-acyl-sn-glycerol-3-phosphate (lysophosphatidic acid or LPA) into 1,2-diacyl-sn-glycerol-3-phosphate (phosphatidic acid or PA) by incorporating an acyl moiety at the sn-2 position of the glycerol backbone. Acts on LPA containing saturated or unsaturated fatty acids C15:0-C20:4 at the sn-1 position using C18:1-CoA as the acyl donor. Also acts on lysophosphatidylethanolamine using oleoyl-CoA, but not arachidonoyl-CoA, and lysophosphatidylinositol using arachidonoyl-CoA, but not oleoyl-CoA. Activity toward lysophosphatidylglycerol not detectable. This is 1-acyl-sn-glycerol-3-phosphate acyltransferase epsilon (AGPAT5) from Homo sapiens (Human).